The sequence spans 153 residues: SsrA-binding protein (153 aa).

The protein belongs to the SmpB family.

The protein resides in the cytoplasm. In terms of biological role, required for rescue of stalled ribosomes mediated by trans-translation. Binds to transfer-messenger RNA (tmRNA), required for stable association of tmRNA with ribosomes. tmRNA and SmpB together mimic tRNA shape, replacing the anticodon stem-loop with SmpB. tmRNA is encoded by the ssrA gene; the 2 termini fold to resemble tRNA(Ala) and it encodes a 'tag peptide', a short internal open reading frame. During trans-translation Ala-aminoacylated tmRNA acts like a tRNA, entering the A-site of stalled ribosomes, displacing the stalled mRNA. The ribosome then switches to translate the ORF on the tmRNA; the nascent peptide is terminated with the 'tag peptide' encoded by the tmRNA and targeted for degradation. The ribosome is freed to recommence translation, which seems to be the essential function of trans-translation. The protein is SsrA-binding protein of Paramagnetospirillum magneticum (strain ATCC 700264 / AMB-1) (Magnetospirillum magneticum).